We begin with the raw amino-acid sequence, 108 residues long: UPF0060 membrane protein YnfA (108 aa).

At 1 to 5 (MLKTT) the chain is on the periplasmic side. A helical membrane pass occupies residues 6–26 (LLFFVTALCEIIGCFLPWLWI). Topologically, residues 27-30 (KRGA) are cytoplasmic. Residues 31–51 (SVWWLLPAAASLALFVWLLTL) form a helical membrane-spanning segment. Over 52 to 60 (HPAASGRVY) the chain is Periplasmic. A helical transmembrane segment spans residues 61–81 (AAYGGVYVCTALLWLRVVDGV). At 82–84 (RLT) the chain is on the cytoplasmic side. The chain crosses the membrane as a helical span at residues 85 to 105 (VYDWSGALIALCGMLIIVVGW). Residues 106 to 108 (GRT) lie on the Periplasmic side of the membrane.

The protein belongs to the UPF0060 family.

The protein resides in the cell inner membrane. This Salmonella typhi protein is UPF0060 membrane protein YnfA.